A 178-amino-acid chain; its full sequence is Riboflavin kinase (178 aa).

Mg(2+) contacts are provided by threonine 39 and asparagine 41. Glutamate 116 (nucleophile) is an active-site residue.

This sequence belongs to the flavokinase family. The cofactor is Zn(2+). Requires Mg(2+) as cofactor.

The catalysed reaction is riboflavin + ATP = FMN + ADP + H(+). It functions in the pathway cofactor biosynthesis; FMN biosynthesis; FMN from riboflavin (ATP route): step 1/1. Its function is as follows. Catalyzes the phosphorylation of riboflavin (vitamin B2) to form flavin mononucleotide (FMN) coenzyme. This chain is Riboflavin kinase (FMN1), found in Scheffersomyces stipitis (strain ATCC 58785 / CBS 6054 / NBRC 10063 / NRRL Y-11545) (Yeast).